We begin with the raw amino-acid sequence, 326 residues long: tRNA dimethylallyltransferase 2 (326 aa).

14-21 (GPTASGKT) contacts ATP. Residue 16–21 (TASGKT) coordinates substrate. Positions 39 to 42 (DSMQ) are interaction with substrate tRNA.

Belongs to the IPP transferase family. In terms of assembly, monomer. The cofactor is Mg(2+).

It catalyses the reaction adenosine(37) in tRNA + dimethylallyl diphosphate = N(6)-dimethylallyladenosine(37) in tRNA + diphosphate. Its function is as follows. Catalyzes the transfer of a dimethylallyl group onto the adenine at position 37 in tRNAs that read codons beginning with uridine, leading to the formation of N6-(dimethylallyl)adenosine (i(6)A). This chain is tRNA dimethylallyltransferase 2, found in Geotalea daltonii (strain DSM 22248 / JCM 15807 / FRC-32) (Geobacter daltonii).